The chain runs to 364 residues: Nucleoside ABC transporter permease protein NupB (364 aa).

The next 8 helical transmembrane spans lie at 9 to 29 (LVPL…MLAF), 77 to 99 (FNIG…ALSF), 105 to 125 (LLMI…MGFI), 138 to 158 (VITT…MIHS), 195 to 215 (TLNI…IIFT), 244 to 264 (LILS…VYGF), 284 to 304 (MAVA…ALLF), and 326 to 346 (VVTA…VMLP).

Belongs to the binding-protein-dependent transport system permease family. The complex is composed of two ATP-binding proteins (NupA), two transmembrane proteins (NupB and NupC) and a solute-binding protein (BmpA).

It is found in the cell membrane. Its function is as follows. Part of an ABC transporter complex involved in the uptake of all common nucleosides. Responsible for the translocation of the substrate across the membrane. This Lactococcus lactis subsp. cremoris (strain MG1363) protein is Nucleoside ABC transporter permease protein NupB.